The sequence spans 209 residues: MTIKVLFVDDHEMVRIGISSYLSTQSDIEVVGEGASGKEAIAKAHELKPDLILMDLLMEDMDGVEATTQIKKDLPQIKVLMLTSFIEDKEVYRALDAGVDSYILKTTSAKDIADAVRKTSRGESVFEPEVLVKMRNRMKKRAELYEMLTEREMEILLLIAKGYSNQEIASASHITIKTVKTHVSNILSKLEVQDRTQAVIYAFQHNLIQ.

The region spanning 4 to 120 is the Response regulatory domain; that stretch reads KVLFVDDHEM…DIADAVRKTS (117 aa). Asp55 is modified (4-aspartylphosphate). The 66-residue stretch at 141-206 folds into the HTH luxR-type domain; it reads RAELYEMLTE…QAVIYAFQHN (66 aa). The segment at residues 165–184 is a DNA-binding region (H-T-H motif); the sequence is NQEIASASHITIKTVKTHVS.

In terms of assembly, homodimer. Phosphorylated by VraS. Phosphorylation state of VraR controls dimerization of the protein.

The protein localises to the cytoplasm. Member of the two-component regulatory system VraS/VraR involved in the control of the cell wall peptidoglycan biosynthesis. Upon cellular stress, the histidine kinase VraS transfers the phosphoryl group onto VraR. Upon phosphorylation, VraR dimerizes at the N-terminal domain. In turn, phosphorylation-induced dimerization expands and enhances the VraR binding to its own promoter leading to increased expression and subsequent modulation of as many as 40 genes, which ultimately constitute the S.aureus response to cell wall damage. In addition, inhibits the host autophagic flux and delays the early stage of autophagosome formation, thereby promoting bacterial survival. Facilitates the ability of S.aureus to resist host polymorphonuclear leukocytes-mediated phagocytosis and killing thus contributing to immune evasion. This chain is Response regulator protein VraR (vraR), found in Staphylococcus aureus (strain Mu3 / ATCC 700698).